The sequence spans 378 residues: tRNA-specific 2-thiouridylase MnmA (378 aa).

Residues 27 to 34 (AMSGGVDS) and Leu-53 each bind ATP. The Nucleophile role is filled by Cys-121. The cysteines at positions 121 and 218 are disulfide-linked. An ATP-binding site is contributed by Gly-145. The segment at 168 to 170 (RDQ) is interaction with tRNA. Cys-218 acts as the Cysteine persulfide intermediate in catalysis.

The protein belongs to the MnmA/TRMU family.

The protein resides in the cytoplasm. It carries out the reaction S-sulfanyl-L-cysteinyl-[protein] + uridine(34) in tRNA + AH2 + ATP = 2-thiouridine(34) in tRNA + L-cysteinyl-[protein] + A + AMP + diphosphate + H(+). Functionally, catalyzes the 2-thiolation of uridine at the wobble position (U34) of tRNA, leading to the formation of s(2)U34. This is tRNA-specific 2-thiouridylase MnmA from Rhizorhabdus wittichii (strain DSM 6014 / CCUG 31198 / JCM 15750 / NBRC 105917 / EY 4224 / RW1) (Sphingomonas wittichii).